The sequence spans 296 residues: MIRVKIPATSANMGAGFDTLGMALKLYNEITIEETEGETEIKLLGGELDRNYRNNLTYISIIKVYEFFNKEFKGFKIDMSKTNIPLSRGLGSSAACIVGGIVGANALLNEKMTIKDMLKIAVDIEGHPDNVAPALLGGVIISIKDMENIIYSRINVKSQLKYAVMVPDFKVSTELSRKVLPNEYSREDALFNISRCSMLVSALNNGENEKLRYLFEDKIHQPYRKKLINNIDSIFLKAKEYGSLGEFISGSGSTLIAVLEEADENFILKMKTYLDSLKDGWRIFEVENDNNGAVII.

Residue 85-95 participates in ATP binding; it reads PLSRGLGSSAA.

This sequence belongs to the GHMP kinase family. Homoserine kinase subfamily.

Its subcellular location is the cytoplasm. It carries out the reaction L-homoserine + ATP = O-phospho-L-homoserine + ADP + H(+). It functions in the pathway amino-acid biosynthesis; L-threonine biosynthesis; L-threonine from L-aspartate: step 4/5. Functionally, catalyzes the ATP-dependent phosphorylation of L-homoserine to L-homoserine phosphate. This Clostridium acetobutylicum (strain ATCC 824 / DSM 792 / JCM 1419 / IAM 19013 / LMG 5710 / NBRC 13948 / NRRL B-527 / VKM B-1787 / 2291 / W) protein is Homoserine kinase.